A 148-amino-acid chain; its full sequence is Outer envelope pore protein 16-1, chloroplastic (148 aa).

A contains 4 beta strands region spans residues Pro2–Glu73. The next 3 membrane-spanning stretches (helical) occupy residues Val75 to Ile91, Asn102 to Gly118, and Ile125 to Val142.

Belongs to the Tim17/Tim22/Tim23 family. Plastid outer envelope porin OEP16 (TC 1.B.30) subfamily. In terms of assembly, homodimer and oligomers in membrane. Forms large complexes including TOC33, pPORA and OEP161 during pPORA import into plastids at the plastid envelope membrane. As to expression, expressed predominantly in leaves and cotyledons.

The protein localises to the plastid. Its subcellular location is the chloroplast outer membrane. The protein resides in the etioplast membrane. Stimulated by GTP. Voltage-dependent high-conductance channel with a slight cation-selectivity; selective for amino acids but excludes triosephosphates or uncharged sugars. Non-essential amino acid-selective channel protein and translocation pore for NADPH:protochlorophyllide oxidoreductase A (PORA) and possibly PORB. Involved in PORA precursor (pPORA) import and thus confers photoprotection onto etiolated seedlings during greening. The protein is Outer envelope pore protein 16-1, chloroplastic (OEP161) of Arabidopsis thaliana (Mouse-ear cress).